The primary structure comprises 387 residues: Low specificity L-threonine aldolase (387 aa).

K213 is modified (N6-(pyridoxal phosphate)lysine). Residue K228 forms a Glycyl lysine isopeptide (Lys-Gly) (interchain with G-Cter in ubiquitin) linkage. Phosphoserine occurs at positions 367 and 369. A Phosphothreonine modification is found at T370.

It belongs to the threonine aldolase family. In terms of assembly, homotetramer. The cofactor is pyridoxal 5'-phosphate.

The enzyme catalyses L-threonine = acetaldehyde + glycine. It carries out the reaction L-allo-threonine = acetaldehyde + glycine. The protein operates within amino-acid biosynthesis; glycine biosynthesis; glycine from L-allo-threonine: step 1/1. Its pathway is amino-acid degradation; L-threonine degradation via aldolase pathway; acetaldehyde and glycine from L-threonine: step 1/1. Catalyzes the cleavage of L-allo-threonine and L-threonine to glycine and acetaldehyde. This Saccharomyces cerevisiae (strain ATCC 204508 / S288c) (Baker's yeast) protein is Low specificity L-threonine aldolase (GLY1).